The chain runs to 532 residues: Neutral amino acid transporter A (532 aa).

M1 carries the N-acetylmethionine modification. Polar residues predominate over residues 1–10; the sequence is MEKSNETNGY. The segment at 1–25 is disordered; it reads MEKSNETNGYLDSAQAGPAAGPGAP. Residues 1–41 lie on the Cytoplasmic side of the membrane; sequence MEKSNETNGYLDSAQAGPAAGPGAPGTAAGRARRCAGFLRR. Over residues 14 to 25 the composition is skewed to low complexity; it reads AQAGPAAGPGAP. Helical transmembrane passes span 42 to 62, 88 to 108, and 119 to 139; these read QALVLLTVSGVLAGAGLGAAL, MIILPLVVCSLVSGAASLDAS, and AYFGLTTLSASALAVALAFII. Over 140-216 the chain is Extracellular; it reads KPGSGAQTLQ…VTHEKIPIGT (77 aa). N201 and N206 each carry an N-linked (GlcNAc...) asparagine glycan. The next 6 helical transmembrane spans lie at 217-237, 257-277, 298-318, 328-348, 373-393, and 418-438; these read EIEGMNILGLVLFALVLGVAL, ATMVLVSWIMWYVPVGIMFLV, IFASILGHVIHGGIVLPLIYF, FLLGLLAPFATAFATCSSSAT, IGATVNMDGAAIFQCVAAVFI, and VGAAGVPAGGVLTIAIILEAI. The tract at residues 500–532 is disordered; sequence CKSEEETSPLVTHQNPAGPVASAPELESKESVL. A phosphoserine mark is found at S507, S527, and S530.

This sequence belongs to the dicarboxylate/amino acid:cation symporter (DAACS) (TC 2.A.23) family. SLC1A4 subfamily. As to expression, expressed mostly in brain, muscle, and pancreas but detected in all tissues examined.

It localises to the membrane. The protein resides in the melanosome. The catalysed reaction is L-threonine(in) + Na(+)(in) = L-threonine(out) + Na(+)(out). It catalyses the reaction L-serine(in) + Na(+)(in) = L-serine(out) + Na(+)(out). It carries out the reaction L-cysteine(in) + Na(+)(in) = L-cysteine(out) + Na(+)(out). The enzyme catalyses L-alanine(in) + Na(+)(in) = L-alanine(out) + Na(+)(out). The catalysed reaction is L-proline(in) + Na(+)(in) = L-proline(out) + Na(+)(out). It catalyses the reaction 4-hydroxy-L-proline(in) + Na(+)(in) = 4-hydroxy-L-proline(out) + Na(+)(out). Functionally, sodium-dependent neutral amino-acid transporter that mediates transport of alanine, serine, cysteine, proline, hydroxyproline and threonine. The polypeptide is Neutral amino acid transporter A (Homo sapiens (Human)).